Reading from the N-terminus, the 102-residue chain is Late embryogenesis abundant protein D-19 (102 aa).

The segment at 1–102 is disordered; that stretch reads MASEQYQAMR…IDESKFRTKN (102 aa). A compositionally biased stretch (basic and acidic residues) spans 48 to 58; the sequence is EGRHKGGETRK.

It belongs to the small hydrophilic plant seed protein family.

Functionally, LEA proteins are late embryonic proteins abundant in higher plant seed embryos. There are two subsets of LEA proteins (5a and 5b), the first ones are expressed when the cotyledon weight reach 80 mg and the second set are expressed above 100 mg. The function of those proteins is not known. This Gossypium hirsutum (Upland cotton) protein is Late embryogenesis abundant protein D-19.